Reading from the N-terminus, the 323-residue chain is Vertebrate ancient opsin (323 aa).

Residues 1-38 (MDTLRIAVNGVSYNEASEIYKPHADPFTGPITNLAPWN) lie on the Extracellular side of the membrane. A helical transmembrane segment spans residues 39-63 (FAVLATLMFVITSLSLFENFTVMLA). The Cytoplasmic portion of the chain corresponds to 64 to 75 (TYKFKQLRQPLN). A helical transmembrane segment spans residues 76–100 (YIIVNLSLADFLVSLTGGTISFLTN). Over 101 to 115 (ARGYFFLGNWACVLE) the chain is Extracellular. Cysteine 112 and cysteine 189 are joined by a disulfide. Residues 116 to 135 (GFAVTYFGIVAMWSLAVLSF) traverse the membrane as a helical segment. The Cytoplasmic portion of the chain corresponds to 136–154 (ERYFVICRPLGNVRLRGKH). A helical transmembrane segment spans residues 155–178 (AALGLLFVWTFSFIWTIPPVFGWC). Residues 179–202 (SYTVSKIGTTCEPNWYSNNIWNHT) lie on the Extracellular side of the membrane. N-linked (GlcNAc...) asparagine glycosylation occurs at asparagine 200. The chain crosses the membrane as a helical span at residues 203–230 (YIITFFVTCFIMPLGMIIYCYGKLLQKL). Residues 231-250 (RKVSHDRLGNAKKPERQVSR) are Cytoplasmic-facing. The helical transmembrane segment at 251–274 (MVVVMIVAYLVGWTPYAAFSIIVT) threads the bilayer. Residues 275–282 (ACPTIYLD) lie on the Extracellular side of the membrane. The chain crosses the membrane as a helical span at residues 283 to 307 (PRLAAAPAFFSKTAAVYNPVIYVFM). Residue lysine 294 is modified to N6-(retinylidene)lysine. Topologically, residues 308–323 (NKQVSTQLNWGFWSRA) are cytoplasmic.

This sequence belongs to the G-protein coupled receptor 1 family. Opsin subfamily. In terms of processing, phosphorylated on some or all of the serine and threonine residues present in the C-terminal region.

It localises to the membrane. The protein is Vertebrate ancient opsin of Salmo salar (Atlantic salmon).